The sequence spans 539 residues: Chaperonin GroEL (539 aa).

Residues 30 to 33 (TLGP), Lys51, 87 to 91 (DGTTT), Gly415, and Asp495 each bind ATP.

The protein belongs to the chaperonin (HSP60) family. Forms a cylinder of 14 subunits composed of two heptameric rings stacked back-to-back. Interacts with the co-chaperonin GroES.

The protein resides in the cytoplasm. The catalysed reaction is ATP + H2O + a folded polypeptide = ADP + phosphate + an unfolded polypeptide.. In terms of biological role, together with its co-chaperonin GroES, plays an essential role in assisting protein folding. The GroEL-GroES system forms a nano-cage that allows encapsulation of the non-native substrate proteins and provides a physical environment optimized to promote and accelerate protein folding. The chain is Chaperonin GroEL from Serratia rubidaea (Serratia marinorubra).